We begin with the raw amino-acid sequence, 785 residues long: Ribosome biogenesis protein BOP1 homolog (785 aa).

A compositionally biased stretch (basic residues) spans 1-11; that stretch reads MTKKLTIKRKV. The tract at residues 1-160 is disordered; the sequence is MTKKLTIKRK…DSDTSDEEDI (160 aa). Acidic residues-rich tracts occupy residues 45 to 54, 61 to 73, and 85 to 102; these read EDSTDDEGID, SSEDLEFESDEEG, and SGDDDEESAEDEEEEDDA. Residues 103–112 are compositionally biased toward basic and acidic residues; it reads DAKKSSKNND. Residues 150–159 are compositionally biased toward acidic residues; the sequence is ADSDTSDEED. 7 WD repeats span residues 446 to 487, 489 to 527, 571 to 613, 616 to 654, 657 to 696, 700 to 739, and 755 to 785; these read GHTD…RTIE, EDVVRCVAWCPNAKLSIIAVATGSRLLLVNPKVGDKLLV, THFK…SQIP, KSKGLIQCVLFHPVKPCFFVATQHNIRIYDLVKQELIKK, TNSKWISGMSIHPKGDNLLVSTYDKKMLWFDLDLSTKPYQ, LHRNAVRSVAFHLRYPLFASGSDDQAVIVSHGMVYNDLLQ, and REEFGVLDVNWHPVQPWVFSTGADCTIRLFT.

The protein belongs to the WD repeat BOP1/ERB1 family.

It localises to the nucleus. The protein localises to the nucleolus. The protein resides in the nucleoplasm. Required for maturation of ribosomal RNAs and formation of the large ribosomal subunit. The sequence is that of Ribosome biogenesis protein BOP1 homolog from Drosophila persimilis (Fruit fly).